The sequence spans 260 residues: Thaumatin-like protein 1 (260 aa).

The N-terminal stretch at 1–32 (MIITVLHSHVSFYFIILSFLFFHALHLVGSDG) is a signal peptide. Disulfide bonds link Cys41/Cys255, Cys89/Cys100, Cys105/Cys112, Cys166/Cys245, Cys171/Cys228, Cys179/Cys191, Cys195/Cys204, and Cys205/Cys215.

Belongs to the thaumatin family. As to expression, expressed only in roots.

In terms of biological role, involved in local responses of roots to colonization by non-pathogenic plant growth-promoting rhizobacteria (PGPR) fluorescent Pseudomonas spp., but seems to not being required for the establishment of subsequent induced systemic resistance (ISR). The sequence is that of Thaumatin-like protein 1 from Arabidopsis thaliana (Mouse-ear cress).